The sequence spans 664 residues: Chaperone protein DnaK (664 aa).

Thr201 bears the Phosphothreonine; by autocatalysis mark. Disordered stretches follow at residues 516 to 538 (DAEKHKEEDKKRREASDARNEAD) and 578 to 664 (APVE…KPND). Residues 578–592 (APVEKIKDASEELSR) show a composition bias toward basic and acidic residues. Composition is skewed to low complexity over residues 600–617 (AMQSQSASAAASSAANAQ) and 638–649 (AGNSASSNSNNE).

This sequence belongs to the heat shock protein 70 family.

In terms of biological role, acts as a chaperone. The chain is Chaperone protein DnaK from Chlamydia caviae (strain ATCC VR-813 / DSM 19441 / 03DC25 / GPIC) (Chlamydophila caviae).